The primary structure comprises 473 residues: Photosystem II CP43 reaction center protein (473 aa).

Positions 1–14 (MKTLYSLRRFYHVE) are excised as a propeptide. Thr-15 is modified (N-acetylthreonine). Phosphothreonine is present on Thr-15. 5 helical membrane-spanning segments follow: residues 69–93 (LFEV…PHLA), 134–155 (LLGP…KDRN), 178–200 (KAFY…RKIT), 255–275 (KPFA…LSYS), and 291–312 (WFNN…ASQA). [CaMn4O5] cluster is bound at residue Glu-367. Residues 447-471 (RARAAAAGFEKGIDRDFEPVLSMTP) traverse the membrane as a helical segment.

Belongs to the PsbB/PsbC family. PsbC subfamily. PSII is composed of 1 copy each of membrane proteins PsbA, PsbB, PsbC, PsbD, PsbE, PsbF, PsbH, PsbI, PsbJ, PsbK, PsbL, PsbM, PsbT, PsbX, PsbY, PsbZ, Psb30/Ycf12, at least 3 peripheral proteins of the oxygen-evolving complex and a large number of cofactors. It forms dimeric complexes. Binds multiple chlorophylls and provides some of the ligands for the Ca-4Mn-5O cluster of the oxygen-evolving complex. It may also provide a ligand for a Cl- that is required for oxygen evolution. PSII binds additional chlorophylls, carotenoids and specific lipids. serves as cofactor.

The protein resides in the plastid. The protein localises to the chloroplast thylakoid membrane. Its function is as follows. One of the components of the core complex of photosystem II (PSII). It binds chlorophyll and helps catalyze the primary light-induced photochemical processes of PSII. PSII is a light-driven water:plastoquinone oxidoreductase, using light energy to abstract electrons from H(2)O, generating O(2) and a proton gradient subsequently used for ATP formation. This is Photosystem II CP43 reaction center protein from Pisum sativum (Garden pea).